Consider the following 161-residue polypeptide: uncharacterized protein (161 aa).

The helical transmembrane segment at 76-94 (ISISSQCIFNVVILSFVFT) threads the bilayer.

It localises to the membrane. This is an uncharacterized protein from Saccharomyces cerevisiae (strain ATCC 204508 / S288c) (Baker's yeast).